Consider the following 270-residue polypeptide: Putative carbamate hydrolase RutD (270 aa).

This sequence belongs to the AB hydrolase superfamily. Hydrolase RutD family.

It carries out the reaction carbamate + 2 H(+) = NH4(+) + CO2. Involved in pyrimidine catabolism. May facilitate the hydrolysis of carbamate, a reaction that can also occur spontaneously. The polypeptide is Putative carbamate hydrolase RutD (Escherichia coli (strain SMS-3-5 / SECEC)).